The sequence spans 220 residues: Photosynthetic NDH subunit of lumenal location 3, chloroplastic (220 aa).

The N-terminal 35 residues, Met1 to Arg35, are a transit peptide targeting the chloroplast. The transit peptide at Arg36–Asn77 directs the protein to the thylakoid.

The protein belongs to the PsbQ family. In terms of assembly, part of the chloroplast NDH complex, composed of a mixture of chloroplast and nucleus encoded subunits. Component of the NDH lumenal subcomplex, at least composed of PnsL1, PnsL2, PnsL3, PnsL4 and PnsL5.

It localises to the plastid. The protein localises to the chloroplast thylakoid membrane. Functionally, NDH shuttles electrons from NAD(P)H:plastoquinone, via FMN and iron-sulfur (Fe-S) centers, to quinones in the photosynthetic chain and possibly in a chloroplast respiratory chain. The immediate electron acceptor for the enzyme in this species is believed to be plastoquinone. Couples the redox reaction to proton translocation, and thus conserves the redox energy in a proton gradient. Required for both formation and activity of the chloroplast NAD(P)H dehydrogenase (NDH) complex. This chain is Photosynthetic NDH subunit of lumenal location 3, chloroplastic, found in Arabidopsis thaliana (Mouse-ear cress).